Reading from the N-terminus, the 907-residue chain is MSKEDFVNLPFFVENGWIKRTCPVCGRTFWTLDPERKVCGDQPCEEYSFIGRSVGVKPESLSATRKMFIDFFEKRNHTPVKRYPVVARWREDVYLVGASIYDFQPWVTEGLVPPPANPLVISQPSIRLTDLDNVGKTGRHLTGFEMMAHHAFNIRDQRVYWANETVEYAFEVLTKVYGVKPEEITFIFDMWSGGGNAGEDYEVIVRGLEVATLVFMHYKTAEDGSLIPIENRIVDTGYGLERIYWLLTGHYNVYEAVFSGVIDRLRKLSGVEKPPDDLMYRLALKSGRLDFKKPLEALETLRNVSREVGISFEELQRVLEPNEALYALADHTRTIAWMLGDGVVPSNSGAGYLARLLIRRSLRLLRRLQLELPLSEIVLWQIQYWRNDFPEYLELQDEIRDIVDTEEERFEESVKRGEKVLGALLGELKSKGLRVVPAEEIVKLYESHGVPPELVKEKAESEGLEADITGFYSRLAEMRSRAQVQQKEALQLPLDPSRLKEFRPTRLLYYENEKLAEFEATVLGVLDGKYVVLDSTAFYPEGGGQLSDTGVLVYEGGECRVKYAFKVGDIVVHECEGNAPPVGARVKGVVDMERRLALMRHHTATHIVLGALRSVLGKHVWQAGAQKTPDYVRFDFTHHKAITPEQAKAIEALANRVVMEDRPVRKYLLNRTEAEKAFGFTLYQGGAVPQTTLRVVEIPGWDAEACGGTHCDRTGEIGLIKILGFEKIQDGVVRVVFKAGMPALEYVQGMGDKLKNLQEILDASYEGLEEKAKSLKSRIEALEKEVKKLREELLKGGVSVSPVATVQGVQVYVYFSDEYEPREAALAISRTRTSSVILAYNSKGNFALKVTDDLLDRLDAREIGRSVCESLRGKGGGVRDLYQGRIDETKSVDKVIVEALRQALERR.

His-602, His-606, Cys-706, and His-710 together coordinate Zn(2+).

This sequence belongs to the class-II aminoacyl-tRNA synthetase family. Zn(2+) serves as cofactor.

The protein localises to the cytoplasm. It catalyses the reaction tRNA(Ala) + L-alanine + ATP = L-alanyl-tRNA(Ala) + AMP + diphosphate. Catalyzes the attachment of alanine to tRNA(Ala) in a two-step reaction: alanine is first activated by ATP to form Ala-AMP and then transferred to the acceptor end of tRNA(Ala). Also edits incorrectly charged Ser-tRNA(Ala) and Gly-tRNA(Ala) via its editing domain. The protein is Alanine--tRNA ligase of Thermofilum pendens (strain DSM 2475 / Hrk 5).